The sequence spans 325 residues: MPAAHSESMNKTKIAKIAFPIAALLCFFPFVSSAAALVLGIVLAVALGNPYVDKTRSYTHHLLSLSVIGLGAGMDLMVVGRVGLQGIGYTVVGISFTLLLGMLIGRMLKIERDTSTLITVGTAICGGSAIAAVAPTIRAKSHEVSVALGTVFMLNACALVIFPWIGHLLNLTQTQFGLWSALAIHDTSSVVGSTLQYGPESLQVGTTVKLARALWIVPVTFLIGLFYFRGQKVEGGAGKAKKPWFILGFLIAAALVTWIPELRPVGHVVETVAKRALVVTLFLIGANLTKETLKSVGIKPFLQGVGLWIVVASCTLGAILIGWIH.

8 consecutive transmembrane segments (helical) span residues 21–43, 58–80, 87–105, 115–137, 144–166, 211–230, 243–260, and 302–324; these read IAAL…GIVL, YTHH…MVVG, IGYT…MLIG, STLI…APTI, VSVA…PWIG, ARAL…YFRG, PWFI…TWIP, and LQGV…IGWI.

The protein belongs to the UPF0324 family.

The protein resides in the cell membrane. This is UPF0324 membrane protein Bd1437 from Bdellovibrio bacteriovorus (strain ATCC 15356 / DSM 50701 / NCIMB 9529 / HD100).